Consider the following 640-residue polypeptide: Threonine--tRNA ligase (640 aa).

Residues 1-60 (MKITFPDGAVKEFEPGVSTADIAASISPGLKKKALAGKLNGELLDLVTPIHEDGAIEIVT) form the TGS domain. A catalytic region spans residues 241-538 (DHRKLGKELE…LIEEYKGAFP (298 aa)). Residues C334, H385, and H515 each contribute to the Zn(2+) site.

It belongs to the class-II aminoacyl-tRNA synthetase family. As to quaternary structure, homodimer. Requires Zn(2+) as cofactor.

Its subcellular location is the cytoplasm. It catalyses the reaction tRNA(Thr) + L-threonine + ATP = L-threonyl-tRNA(Thr) + AMP + diphosphate + H(+). Its function is as follows. Catalyzes the attachment of threonine to tRNA(Thr) in a two-step reaction: L-threonine is first activated by ATP to form Thr-AMP and then transferred to the acceptor end of tRNA(Thr). Also edits incorrectly charged L-seryl-tRNA(Thr). The sequence is that of Threonine--tRNA ligase from Listeria welshimeri serovar 6b (strain ATCC 35897 / DSM 20650 / CCUG 15529 / CIP 8149 / NCTC 11857 / SLCC 5334 / V8).